A 177-amino-acid chain; its full sequence is Transcription termination/antitermination protein NusG (177 aa).

A KOW domain is found at Glu125–Arg150.

Belongs to the NusG family.

In terms of biological role, participates in transcription elongation, termination and antitermination. The sequence is that of Transcription termination/antitermination protein NusG from Campylobacter jejuni subsp. jejuni serotype O:2 (strain ATCC 700819 / NCTC 11168).